The following is a 328-amino-acid chain: Phosphate acyltransferase (328 aa).

Belongs to the PlsX family. In terms of assembly, homodimer. Probably interacts with PlsY.

It is found in the cytoplasm. It carries out the reaction a fatty acyl-[ACP] + phosphate = an acyl phosphate + holo-[ACP]. It participates in lipid metabolism; phospholipid metabolism. In terms of biological role, catalyzes the reversible formation of acyl-phosphate (acyl-PO(4)) from acyl-[acyl-carrier-protein] (acyl-ACP). This enzyme utilizes acyl-ACP as fatty acyl donor, but not acyl-CoA. The polypeptide is Phosphate acyltransferase (Geobacillus thermodenitrificans (strain NG80-2)).